A 158-amino-acid polypeptide reads, in one-letter code: Small ribosomal subunit protein uS7c (158 aa).

Belongs to the universal ribosomal protein uS7 family. As to quaternary structure, part of the 30S ribosomal subunit.

It is found in the plastid. The protein resides in the chloroplast. Its function is as follows. One of the primary rRNA binding proteins, it binds directly to 16S rRNA where it nucleates assembly of the head domain of the 30S subunit. This Trieres chinensis (Marine centric diatom) protein is Small ribosomal subunit protein uS7c (rps7).